Here is a 490-residue protein sequence, read N- to C-terminus: POC1 centriolar protein homolog B (490 aa).

WD repeat units lie at residues 16–55 (GHKD…RAFR), 58–97 (GHTD…ESTV), 100–139 (AHTA…FLYS), 142–181 (RHTN…CINI), 184–223 (DYGG…LIQH), 226–265 (VHNA…LIYT), and 268–307 (GHKG…LNYR). The segment covering 375-388 (DGASSSRAQFTSGM) has biased composition (polar residues). Residues 375–427 (DGASSSRAQFTSGMDSGPFRTHTQAREEEDENQEERFAGGMTASPAERSGIPS) form a disordered region. Positions 431–463 (STLENIVQQLDILTQTVAVLEERLTLTEDKLRT) form a coiled coil.

Belongs to the WD repeat POC1 family.

The protein resides in the cytoplasm. The protein localises to the cytoskeleton. It localises to the microtubule organizing center. Its subcellular location is the centrosome. It is found in the centriole. Functionally, plays an important role in centriole assembly and/or stability and ciliogenesis. Involved in early steps of centriole duplication, as well as in the later steps of centriole length control. The protein is POC1 centriolar protein homolog B of Danio rerio (Zebrafish).